The primary structure comprises 250 residues: 3-deoxy-manno-octulosonate cytidylyltransferase (250 aa).

It belongs to the KdsB family.

The protein resides in the cytoplasm. It catalyses the reaction 3-deoxy-alpha-D-manno-oct-2-ulosonate + CTP = CMP-3-deoxy-beta-D-manno-octulosonate + diphosphate. It functions in the pathway nucleotide-sugar biosynthesis; CMP-3-deoxy-D-manno-octulosonate biosynthesis; CMP-3-deoxy-D-manno-octulosonate from 3-deoxy-D-manno-octulosonate and CTP: step 1/1. It participates in bacterial outer membrane biogenesis; lipopolysaccharide biosynthesis. Its function is as follows. Activates KDO (a required 8-carbon sugar) for incorporation into bacterial lipopolysaccharide in Gram-negative bacteria. This Rhizobium meliloti (strain 1021) (Ensifer meliloti) protein is 3-deoxy-manno-octulosonate cytidylyltransferase.